Here is a 285-residue protein sequence, read N- to C-terminus: UDP-3-O-acyl-N-acetylglucosamine deacetylase (285 aa).

The Zn(2+) site is built by His-89, His-243, and Asp-247. The active-site Proton donor is the His-270.

The protein belongs to the LpxC family. Zn(2+) is required as a cofactor.

The catalysed reaction is a UDP-3-O-[(3R)-3-hydroxyacyl]-N-acetyl-alpha-D-glucosamine + H2O = a UDP-3-O-[(3R)-3-hydroxyacyl]-alpha-D-glucosamine + acetate. The protein operates within glycolipid biosynthesis; lipid IV(A) biosynthesis; lipid IV(A) from (3R)-3-hydroxytetradecanoyl-[acyl-carrier-protein] and UDP-N-acetyl-alpha-D-glucosamine: step 2/6. Its function is as follows. Catalyzes the hydrolysis of UDP-3-O-myristoyl-N-acetylglucosamine to form UDP-3-O-myristoylglucosamine and acetate, the committed step in lipid A biosynthesis. The sequence is that of UDP-3-O-acyl-N-acetylglucosamine deacetylase from Thermosynechococcus vestitus (strain NIES-2133 / IAM M-273 / BP-1).